We begin with the raw amino-acid sequence, 223 residues long: Phosphoribosylformylglycinamidine synthase subunit PurQ (223 aa).

The region spanning 2-223 is the Glutamine amidotransferase type-1 domain; sequence KVAIIRFPGT…LLENFINFNF (222 aa). Cys-84 functions as the Nucleophile in the catalytic mechanism. Residues His-192 and Glu-194 contribute to the active site.

As to quaternary structure, part of the FGAM synthase complex composed of 1 PurL, 1 PurQ and 2 PurS subunits.

It localises to the cytoplasm. The enzyme catalyses N(2)-formyl-N(1)-(5-phospho-beta-D-ribosyl)glycinamide + L-glutamine + ATP + H2O = 2-formamido-N(1)-(5-O-phospho-beta-D-ribosyl)acetamidine + L-glutamate + ADP + phosphate + H(+). The catalysed reaction is L-glutamine + H2O = L-glutamate + NH4(+). It participates in purine metabolism; IMP biosynthesis via de novo pathway; 5-amino-1-(5-phospho-D-ribosyl)imidazole from N(2)-formyl-N(1)-(5-phospho-D-ribosyl)glycinamide: step 1/2. Part of the phosphoribosylformylglycinamidine synthase complex involved in the purines biosynthetic pathway. Catalyzes the ATP-dependent conversion of formylglycinamide ribonucleotide (FGAR) and glutamine to yield formylglycinamidine ribonucleotide (FGAM) and glutamate. The FGAM synthase complex is composed of three subunits. PurQ produces an ammonia molecule by converting glutamine to glutamate. PurL transfers the ammonia molecule to FGAR to form FGAM in an ATP-dependent manner. PurS interacts with PurQ and PurL and is thought to assist in the transfer of the ammonia molecule from PurQ to PurL. This chain is Phosphoribosylformylglycinamidine synthase subunit PurQ, found in Campylobacter jejuni subsp. jejuni serotype O:2 (strain ATCC 700819 / NCTC 11168).